An 883-amino-acid chain; its full sequence is Phosphoenolpyruvate carboxylase (883 aa).

Residues His-138 and Lys-546 contribute to the active site.

The protein belongs to the PEPCase type 1 family. Requires Mg(2+) as cofactor.

The enzyme catalyses oxaloacetate + phosphate = phosphoenolpyruvate + hydrogencarbonate. Forms oxaloacetate, a four-carbon dicarboxylic acid source for the tricarboxylic acid cycle. In Salmonella choleraesuis (strain SC-B67), this protein is Phosphoenolpyruvate carboxylase.